Here is a 1037-residue protein sequence, read N- to C-terminus: MYLVAGGRGLAGCGHLSVSLLGLLLLLARSGTRALVCLPCDESKCEEPRSCPGSIVQGVCGCCYMCARQRNESCGGAYGLHGACDRGLRCVIRPPLNGDSITEYEVGVCEDEDWDDDQLIGFEPCNENLISGCNIINGKCECGTIRTCNNPFEFPRKDMCLSALKRIEEEKPDCSKARCEVRFSPRCPEDSILIEGYAPPGECCPLPSRCVCDPAGCLRKVCQPGYLNILVSKASGKPGECCDLYECKPVFSVDCSTVECPPVQQAVCPLDSYETQVRLTADGCCTLPARCECLSGLCGFPVCEVGSTPRIVSRGDGTPGKCCDVFECVNETKPACVFNSVEYYDGDMFRMDNCRFCRCQGGVSICFTAQCGELNCERYYVPEGECCPVCEDPIYPLNNPAGCYANGQIRAHGDRWREDDCTFCQCINGEPHCVATACGQSCMHPVKVPGECCPVCEEPTYITIDPPACGELSNCSLKEKDCVYGFKLDHNGCRTCQCKIREELCLGLKRACTLDCPFGFLTDVHNCELCQCRPRPKKCRPTMCDKFCPLGFLKNKHGCDICRCKKCPELPCSKICPLGFQQDSHGCLICKCREVPPSAGPPVLSGTCLSMDGHHHKNEESWHDGCRECYCHNGKEMCALITCPVPACGNPTIRSGQCCPSCTDDFVVQKPELSTPSICHAPGGEYFVEGETWNIDSCTQCTCHSGRVLCETEVCPPLLCQNPSRTQDSCCPQCTDDPPQPSTSHNESVPSYCRNDEGDIFLAAESWKPDACTSCVCVDSAISCYSESCPSVACERPVLRKGQCCPYCLEDTIPKKVVCHFSGKTYADEERWDIDSCTHCYCLQGQTLCSTVSCPPLPCAEPIKVEGSCCPMCPEMYVPEPTNVPIEKKNHRGEIDLEVPMWPTPSENDIIHLPRDMGHLQVDYRDNNRLHPGEDSSLDSIVSVVVPIIICLSIIIAFLLINQKKQWVPLLCWYRTPTKPSSLNNQLVSVDCKKGTRVQVDGPQRMLRIAEPDARFSGFYSMQKQNHLQADNFYQTV.

The N-terminal stretch at 1 to 34 (MYLVAGGRGLAGCGHLSVSLLGLLLLLARSGTRA) is a signal peptide. The IGFBP N-terminal domain maps to 35–112 (LVCLPCDESK…EYEVGVCEDE (78 aa)). Over 35–940 (LVCLPCDESK…HPGEDSSLDS (906 aa)) the chain is Extracellular. 6 disulfides stabilise this stretch: Cys-37–Cys-60, Cys-40–Cys-62, Cys-45–Cys-63, Cys-51–Cys-66, Cys-74–Cys-90, and Cys-84–Cys-109. The Cell attachment site motif lies at 314–316 (RGD). N-linked (GlcNAc...) asparagine glycosylation is present at Asn-330. VWFC domains lie at 334–391 (PACV…PVCE) and 401–457 (AGCY…PVCE). Antistasin-like domains follow at residues 469–498 (CGELSNCSLKEKDCVYGFKLDHNGCRTCQC), 505–532 (CLGLKRACTLDCPFGFLTDVHNCELCQC), 539–564 (CRPTMCDKFCPLGFLKNKHGCDICRC), and 567–592 (CPELPCSKICPLGFQQDSHGCLICKC). 4 consecutive VWFC domains span residues 606–663 (GTCL…PSCT), 677–735 (SICH…PQCT), 751–809 (SYCR…PYCL), and 817–874 (VVCH…PMCP). A helical membrane pass occupies residues 941–961 (IVSVVVPIIICLSIIIAFLLI). Residues 962–1037 (NQKKQWVPLL…LQADNFYQTV (76 aa)) are Cytoplasmic-facing. At Thr-1036 the chain carries Phosphothreonine.

As to quaternary structure, interacts with BMP4 and BMP7. In terms of tissue distribution, expressed during embryonic development in brain, kidney, spinal cord, testis, lens, vibrissae, pinna, tooth primordia and in specific regions of the CNS. Expressed in adult lens. Displays male-specific expression in the fetal gonads with the strongest expression in the Sertoli cells of developing testis.

Its subcellular location is the membrane. Its function is as follows. May play a role in CNS development by interacting with growth factors implicated in motor neuron differentiation and survival. May play a role in capillary formation and maintenance during angiogenesis. Modulates BMP activity by affecting its processing and delivery to the cell surface. This Mus musculus (Mouse) protein is Cysteine-rich motor neuron 1 protein (Crim1).